The chain runs to 692 residues: Glycogen phosphorylase (692 aa).

Lys-586 carries the N6-(pyridoxal phosphate)lysine modification.

Belongs to the glycogen phosphorylase family. It depends on pyridoxal 5'-phosphate as a cofactor.

The catalysed reaction is [(1-&gt;4)-alpha-D-glucosyl](n) + phosphate = [(1-&gt;4)-alpha-D-glucosyl](n-1) + alpha-D-glucose 1-phosphate. In terms of biological role, phosphorylase is an important allosteric enzyme in carbohydrate metabolism. Enzymes from different sources differ in their regulatory mechanisms and in their natural substrates. However, all known phosphorylases share catalytic and structural properties. The polypeptide is Glycogen phosphorylase (glgP) (Aquifex aeolicus (strain VF5)).